The following is a 292-amino-acid chain: Proteasome subunit beta 2 (292 aa).

A propeptide spans 1-59 (MTVDRAPRITDGDTRLSFGSNLSSFSEYLRVHAPEHLPQNRFADTGGVVMGGGDVAPHG) (removed in mature form; by autocatalysis). Threonine 60 acts as the Nucleophile in catalysis.

It belongs to the peptidase T1B family. The 20S proteasome core is composed of 14 alpha and 14 beta subunits that assemble into four stacked heptameric rings, resulting in a barrel-shaped structure. The two inner rings, each composed of seven catalytic beta subunits, are sandwiched by two outer rings, each composed of seven alpha subunits. All four combinations of alpha- and beta-subunits (beta2-alpha1, beta2-alpha2, beta1-alpha2 and beta1-alpha1) yield fully assembled and proteolytically active proteasomes. The catalytic chamber with the active sites is on the inside of the barrel. Has probably a gated structure, the ends of the cylinder being occluded by the N-termini of the alpha-subunits. Is likely capped by the proteasome-associated ATPase, ARC.

The protein resides in the cytoplasm. It catalyses the reaction Cleavage of peptide bonds with very broad specificity.. It participates in protein degradation; proteasomal Pup-dependent pathway. Its activity is regulated as follows. The formation of the proteasomal ATPase ARC-20S proteasome complex, likely via the docking of the C-termini of ARC into the intersubunit pockets in the alpha-rings, may trigger opening of the gate for substrate entry. Interconversion between the open-gate and close-gate conformations leads to a dynamic regulation of the 20S proteasome proteolysis activity. Functionally, component of the proteasome core, a large protease complex with broad specificity involved in protein degradation. The R.erythropolis proteasomes are able to cleave oligopeptides after Tyr, Phe and Leu, very poorly after Arg but not after Glu. Thus, displays chymotrypsin-like activity, low trypsin-like activity but no caspase-like activity. The protein is Proteasome subunit beta 2 of Rhodococcus erythropolis (Arthrobacter picolinophilus).